A 517-amino-acid polypeptide reads, in one-letter code: Cytochrome P450 1A1 (517 aa).

Residues 34 to 45 (WQPRVPKGLKSP) form a mitochondrial targeting signal region. O-linked (GlcNAc) serine glycosylation is present at serine 72. Residue phenylalanine 229 coordinates substrate. Cysteine 462 contributes to the heme binding site.

It belongs to the cytochrome P450 family. In terms of assembly, interacts with cytosolic chaperones HSP70 and HSP90; this interaction is required for initial targeting to mitochondria. Interacts (via mitochondrial targeting signal) with TOMM40 (via N-terminus); this interaction is required for translocation across the mitochondrial outer membrane. The cofactor is heme.

It localises to the endoplasmic reticulum membrane. It is found in the mitochondrion inner membrane. The protein localises to the microsome membrane. Its subcellular location is the cytoplasm. The enzyme catalyses an organic molecule + reduced [NADPH--hemoprotein reductase] + O2 = an alcohol + oxidized [NADPH--hemoprotein reductase] + H2O + H(+). It catalyses the reaction estrone + reduced [NADPH--hemoprotein reductase] + O2 = 2-hydroxyestrone + oxidized [NADPH--hemoprotein reductase] + H2O + H(+). The catalysed reaction is estrone + reduced [NADPH--hemoprotein reductase] + O2 = 4-hydroxyestrone + oxidized [NADPH--hemoprotein reductase] + H2O + H(+). It carries out the reaction estrone + reduced [NADPH--hemoprotein reductase] + O2 = 6alpha-hydroxyestrone + oxidized [NADPH--hemoprotein reductase] + H2O + H(+). The enzyme catalyses estrone + reduced [NADPH--hemoprotein reductase] + O2 = 15alpha-hydroxyestrone + oxidized [NADPH--hemoprotein reductase] + H2O + H(+). It catalyses the reaction estrone + reduced [NADPH--hemoprotein reductase] + O2 = 16alpha-hydroxyestrone + oxidized [NADPH--hemoprotein reductase] + H2O + H(+). The catalysed reaction is 17beta-estradiol + reduced [NADPH--hemoprotein reductase] + O2 = 2-hydroxy-17beta-estradiol + oxidized [NADPH--hemoprotein reductase] + H2O + H(+). It carries out the reaction 17beta-estradiol + reduced [NADPH--hemoprotein reductase] + O2 = 4-hydroxy-17beta-estradiol + oxidized [NADPH--hemoprotein reductase] + H2O + H(+). The enzyme catalyses 17beta-estradiol + reduced [NADPH--hemoprotein reductase] + O2 = 6alpha-hydroxy-17beta-estradiol + oxidized [NADPH--hemoprotein reductase] + H2O + H(+). It catalyses the reaction 17beta-estradiol + reduced [NADPH--hemoprotein reductase] + O2 = 7alpha-hydroxy-17beta-estradiol + oxidized [NADPH--hemoprotein reductase] + H2O + H(+). The catalysed reaction is 17beta-estradiol + reduced [NADPH--hemoprotein reductase] + O2 = 15alpha-hydroxy-17beta-estradiol + oxidized [NADPH--hemoprotein reductase] + H2O + H(+). It carries out the reaction (5Z,8Z,11Z)-eicosatrienoate + reduced [NADPH--hemoprotein reductase] + O2 = 19-hydroxy-(5Z,8Z,11Z)-eicosatrienoate + oxidized [NADPH--hemoprotein reductase] + H2O + H(+). The enzyme catalyses (5Z,8Z,11Z,14Z)-eicosatetraenoate + reduced [NADPH--hemoprotein reductase] + O2 = 16-hydroxy-(5Z,8Z,11Z,14Z)-eicosatetraenoate + oxidized [NADPH--hemoprotein reductase] + H2O + H(+). It catalyses the reaction (5Z,8Z,11Z,14Z)-eicosatetraenoate + reduced [NADPH--hemoprotein reductase] + O2 = 17-hydroxy-(5Z,8Z,11Z,14Z)-eicosatetraenoate + oxidized [NADPH--hemoprotein reductase] + H2O + H(+). The catalysed reaction is (5Z,8Z,11Z,14Z)-eicosatetraenoate + reduced [NADPH--hemoprotein reductase] + O2 = 18-hydroxy-(5Z,8Z,11Z,14Z)-eicosatetraenoate + oxidized [NADPH--hemoprotein reductase] + H2O + H(+). It carries out the reaction (5Z,8Z,11Z,14Z)-eicosatetraenoate + reduced [NADPH--hemoprotein reductase] + O2 = 19-hydroxy-(5Z,8Z,11Z,14Z)-eicosatetraenoate + oxidized [NADPH--hemoprotein reductase] + H2O + H(+). The enzyme catalyses (5Z,8Z,11Z,14Z,17Z)-eicosapentaenoate + reduced [NADPH--hemoprotein reductase] + O2 = 19-hydroxy-(5Z,8Z,11Z,14Z,17Z)-eicosapentaenoate + oxidized [NADPH--hemoprotein reductase] + H2O + H(+). It catalyses the reaction (5Z,8Z,11Z,14Z)-eicosatetraenoate + reduced [NADPH--hemoprotein reductase] + O2 = (8R,9S)-epoxy-(5Z,11Z,14Z)-eicosatrienoate + oxidized [NADPH--hemoprotein reductase] + H2O + H(+). The catalysed reaction is (5Z,8Z,11Z,14Z)-eicosatetraenoate + reduced [NADPH--hemoprotein reductase] + O2 = (11R,12S)-epoxy-(5Z,8Z,14Z)-eicosatrienoate + oxidized [NADPH--hemoprotein reductase] + H2O + H(+). It carries out the reaction (5Z,8Z,11Z,14Z)-eicosatetraenoate + reduced [NADPH--hemoprotein reductase] + O2 = (14S,15R)-epoxy-(5Z,8Z,11Z)-eicosatrienoate + oxidized [NADPH--hemoprotein reductase] + H2O + H(+). The enzyme catalyses (5Z,8Z,11Z,14Z)-eicosatetraenoate + reduced [NADPH--hemoprotein reductase] + O2 = (14R,15S)-epoxy-(5Z,8Z,11Z)-eicosatrienoate + oxidized [NADPH--hemoprotein reductase] + H2O + H(+). It catalyses the reaction (5Z,8Z,11Z,14Z,17Z)-eicosapentaenoate + reduced [NADPH--hemoprotein reductase] + O2 = (17R,18S)-epoxy-(5Z,8Z,11Z,14Z)-eicosatetraenoate + oxidized [NADPH--hemoprotein reductase] + H2O + H(+). The catalysed reaction is (4Z,7Z,10Z,13Z,16Z,19Z)-docosahexaenoate + reduced [NADPH--hemoprotein reductase] + O2 = (19S,20R)-epoxy-(4Z,7Z,10Z,13Z,16Z)-docosapentaenoate + oxidized [NADPH--hemoprotein reductase] + H2O + H(+). It carries out the reaction (4Z,7Z,10Z,13Z,16Z,19Z)-docosahexaenoate + reduced [NADPH--hemoprotein reductase] + O2 = (19R,20S)-epoxy-(4Z,7Z,10Z,13Z,16Z)-docosapentaenoate + oxidized [NADPH--hemoprotein reductase] + H2O + H(+). The enzyme catalyses all-trans-retinol + reduced [NADPH--hemoprotein reductase] + O2 = all-trans-retinal + oxidized [NADPH--hemoprotein reductase] + 2 H2O + H(+). It catalyses the reaction all-trans-retinal + reduced [NADPH--hemoprotein reductase] + O2 = all-trans-retinoate + oxidized [NADPH--hemoprotein reductase] + H2O + 2 H(+). The catalysed reaction is (13S)-hydroperoxy-(9Z,11E)-octadecadienoate = 13-oxo-(9Z,11E)-octadecadienoate + H2O. It carries out the reaction (12S)-hydroperoxy-(5Z,8Z,10E,14Z)-eicosatetraenoate = 12-oxo-(5Z,8Z,10E,14Z)-eicosatetraenoate + H2O. The enzyme catalyses (15S)-hydroperoxy-(5Z,8Z,11Z,13E)-eicosatetraenoate = 15-oxo-(5Z,8Z,11Z,13E)-eicosatetraenoate + H2O. It catalyses the reaction (5S)-hydroperoxy-(6E,8Z,11Z,14Z)-eicosatetraenoate = 5-oxo-(6E,8Z,11Z,14Z)-eicosatetraenoate + H2O. Its pathway is steroid hormone biosynthesis. It functions in the pathway lipid metabolism; fatty acid metabolism. The protein operates within cofactor metabolism; retinol metabolism. Its function is as follows. A cytochrome P450 monooxygenase involved in the metabolism of various endogenous substrates, including fatty acids, steroid hormones and vitamins. Mechanistically, uses molecular oxygen inserting one oxygen atom into a substrate, and reducing the second into a water molecule, with two electrons provided by NADPH via cytochrome P450 reductase (CPR; NADPH-ferrihemoprotein reductase). Catalyzes the hydroxylation of carbon-hydrogen bonds. Exhibits high catalytic activity for the formation of hydroxyestrogens from estrone (E1) and 17beta-estradiol (E2), namely 2-hydroxy E1 and E2, as well as D-ring hydroxylated E1 and E2 at the C15alpha and C16alpha positions. Displays different regioselectivities for polyunsaturated fatty acids (PUFA) hydroxylation. Catalyzes the epoxidation of double bonds of certain PUFA. Converts arachidonic acid toward epoxyeicosatrienoic acid (EET) regioisomers, 8,9-, 11,12-, and 14,15-EET, that function as lipid mediators in the vascular system. Displays an absolute stereoselectivity in the epoxidation of eicosapentaenoic acid (EPA) producing the 17(R),18(S) enantiomer. May play an important role in all-trans retinoic acid biosynthesis in extrahepatic tissues. Catalyzes two successive oxidative transformation of all-trans retinol to all-trans retinal and then to the active form all-trans retinoic acid. May also participate in eicosanoids metabolism by converting hydroperoxide species into oxo metabolites (lipoxygenase-like reaction, NADPH-independent). This Felis catus (Cat) protein is Cytochrome P450 1A1 (CYP1A1).